Reading from the N-terminus, the 98-residue chain is Protein E7 (98 aa).

The E7 terminal domain stretch occupies residues 1–37 (MKGQDVTLKNVAVELEDVVSPIILDCEEEIETEEVDC). Residues 24–28 (LDCEE) carry the LXCXE motif; interaction with host RB1 and TMEM173/STING motif. A zinc finger spans residues 47–83 (CYVCENPLRLALVSSPDGIHQLHQLLLDCISLLCANC). The short motif at 65 to 73 (IHQLHQLLL) is the Nuclear export signal element.

Belongs to the papillomaviridae E7 protein family. In terms of assembly, homodimer. Homooligomer. Interacts with host RB1; this interaction induces dissociation of RB1-E2F1 complex thereby disrupting RB1 activity. Interacts with host EP300; this interaction represses EP300 transcriptional activity. Interacts with protein E2; this interaction inhibits E7 oncogenic activity. Interacts with host TMEM173/STING; this interaction impairs the ability of TMEM173/STING to sense cytosolic DNA and promote the production of type I interferon (IFN-alpha and IFN-beta). Highly phosphorylated.

Its subcellular location is the host cytoplasm. The protein localises to the host nucleus. Plays a role in viral genome replication by driving entry of quiescent cells into the cell cycle. Stimulation of progression from G1 to S phase allows the virus to efficiently use the cellular DNA replicating machinery to achieve viral genome replication. E7 protein has both transforming and trans-activating activities. Induces the disassembly of the E2F1 transcription factor from RB1, with subsequent transcriptional activation of E2F1-regulated S-phase genes. Interferes with host histone deacetylation mediated by HDAC1 and HDAC2, leading to transcription activation. Also plays a role in the inhibition of both antiviral and antiproliferative functions of host interferon alpha. Interaction with host TMEM173/STING impairs the ability of TMEM173/STING to sense cytosolic DNA and promote the production of type I interferon (IFN-alpha and IFN-beta). The sequence is that of Protein E7 from Bovine papillomavirus type 3.